A 258-amino-acid chain; its full sequence is UPF0246 protein IL2146 (258 aa).

The protein belongs to the UPF0246 family.

The protein is UPF0246 protein IL2146 of Idiomarina loihiensis (strain ATCC BAA-735 / DSM 15497 / L2-TR).